The following is a 442-amino-acid chain: tRNA modification GTPase MnmE (442 aa).

Residues R22, E79, and K119 each contribute to the (6S)-5-formyl-5,6,7,8-tetrahydrofolate site. In terms of domain architecture, TrmE-type G spans 216–366; that stretch reads GIKTCLVGAP…LLEKIKSIFA (151 aa). N226 serves as a coordination point for K(+). GTP-binding positions include 226–231, 245–251, and 270–273; these read NSGKSS, SEIPGTT, and DTAG. Residue S230 participates in Mg(2+) binding. The K(+) site is built by S245, I247, and T250. Mg(2+) is bound at residue T251. Residue K442 coordinates (6S)-5-formyl-5,6,7,8-tetrahydrofolate.

Belongs to the TRAFAC class TrmE-Era-EngA-EngB-Septin-like GTPase superfamily. TrmE GTPase family. As to quaternary structure, homodimer. Heterotetramer of two MnmE and two MnmG subunits. It depends on K(+) as a cofactor.

It localises to the cytoplasm. In terms of biological role, exhibits a very high intrinsic GTPase hydrolysis rate. Involved in the addition of a carboxymethylaminomethyl (cmnm) group at the wobble position (U34) of certain tRNAs, forming tRNA-cmnm(5)s(2)U34. In Mesomycoplasma hyopneumoniae (strain 232) (Mycoplasma hyopneumoniae), this protein is tRNA modification GTPase MnmE.